Here is a 158-residue protein sequence, read N- to C-terminus: Transcription elongation factor GreA (158 aa).

Positions 47–75 (ENSEYDAAKDEQAFVEQRITQVEKMIRNA) form a coiled coil.

The protein belongs to the GreA/GreB family.

In terms of biological role, necessary for efficient RNA polymerase transcription elongation past template-encoded arresting sites. The arresting sites in DNA have the property of trapping a certain fraction of elongating RNA polymerases that pass through, resulting in locked ternary complexes. Cleavage of the nascent transcript by cleavage factors such as GreA or GreB allows the resumption of elongation from the new 3'terminus. GreA releases sequences of 2 to 3 nucleotides. The sequence is that of Transcription elongation factor GreA from Oceanobacillus iheyensis (strain DSM 14371 / CIP 107618 / JCM 11309 / KCTC 3954 / HTE831).